The chain runs to 72 residues: Translation initiation factor IF-1 (72 aa).

Positions 1–72 (MAGNDVIEIE…TKGRITYRHK (72 aa)) constitute an S1-like domain.

This sequence belongs to the IF-1 family. Component of the 30S ribosomal translation pre-initiation complex which assembles on the 30S ribosome in the order IF-2 and IF-3, IF-1 and N-formylmethionyl-tRNA(fMet); mRNA recruitment can occur at any time during PIC assembly.

Its subcellular location is the cytoplasm. Its function is as follows. One of the essential components for the initiation of protein synthesis. Stabilizes the binding of IF-2 and IF-3 on the 30S subunit to which N-formylmethionyl-tRNA(fMet) subsequently binds. Helps modulate mRNA selection, yielding the 30S pre-initiation complex (PIC). Upon addition of the 50S ribosomal subunit IF-1, IF-2 and IF-3 are released leaving the mature 70S translation initiation complex. The chain is Translation initiation factor IF-1 from Oenococcus oeni (strain ATCC BAA-331 / PSU-1).